Here is a 255-residue protein sequence, read N- to C-terminus: uncharacterized protein (255 aa).

This sequence belongs to the methyltransferase superfamily.

This is an uncharacterized protein from Mycobacterium ulcerans (strain Agy99).